The sequence spans 359 residues: 3-dehydroquinate synthase (359 aa).

Residues 106 to 110 (GVVGD), 130 to 131 (TT), Lys143, Lys152, and 170 to 173 (TLQT) each bind NAD(+). The Zn(2+) site is built by Glu185, His248, and His265.

This sequence belongs to the sugar phosphate cyclases superfamily. Dehydroquinate synthase family. The cofactor is Co(2+). It depends on Zn(2+) as a cofactor. NAD(+) serves as cofactor.

Its subcellular location is the cytoplasm. The enzyme catalyses 7-phospho-2-dehydro-3-deoxy-D-arabino-heptonate = 3-dehydroquinate + phosphate. It participates in metabolic intermediate biosynthesis; chorismate biosynthesis; chorismate from D-erythrose 4-phosphate and phosphoenolpyruvate: step 2/7. Its function is as follows. Catalyzes the conversion of 3-deoxy-D-arabino-heptulosonate 7-phosphate (DAHP) to dehydroquinate (DHQ). The protein is 3-dehydroquinate synthase of Desulforamulus reducens (strain ATCC BAA-1160 / DSM 100696 / MI-1) (Desulfotomaculum reducens).